Consider the following 542-residue polypeptide: Pre-mRNA-splicing factor 38B (542 aa).

Polar residues predominate over residues 1-12; that stretch reads MANNSPALTGNS. The segment at 1-24 is disordered; the sequence is MANNSPALTGNSQPQHQAAAAVVQ. Residue Ala2 is modified to N-acetylalanine. Ser5 carries the post-translational modification Phosphoserine. Positions 13–24 are enriched in low complexity; sequence QPQHQAAAAVVQ. Lys227 is subject to N6-acetyllysine. Residues 232 to 542 form a disordered region; it reads QIKTRPRKIK…KEHKNKDETV (311 aa). Positions 243-255 are enriched in basic and acidic residues; that stretch reads DGKEGVEEIDRHI. The span at 256–284 shows a compositional bias: basic residues; sequence ERRRSRSPRRSLSPRRSPRRSRSRSHHRD. 4 positions are modified to phosphoserine: Ser288, Ser290, Ser318, and Ser320. Residues 291–327 show a composition bias toward basic and acidic residues; it reads FDRELEREKERQRLEREAKEREKERRRSRSLDRGLDR. A coiled-coil region spans residues 292-323; the sequence is DRELEREKERQRLEREAKEREKERRRSRSLDR. A compositionally biased stretch (basic residues) spans 328–344; the sequence is RRSRSRERHRSRSRSRD. Residues 345–418 show a composition bias toward basic and acidic residues; sequence RKGDRRDRDR…DRRHRDDKKE (74 aa). The span at 419–448 shows a compositional bias: basic residues; it reads SKKKHSRSRSRERKHRSRSRSRNAGKRSRS. Ser446 is subject to Phosphoserine. The span at 449–466 shows a compositional bias: basic and acidic residues; it reads RSKDKASKHKNESKEKSN. Phosphoserine is present on residues Ser471, Ser473, and Ser479. Basic and acidic residues-rich tracts occupy residues 479 to 492 and 499 to 522; these read SVEK…PSRE and RSQD…DHQR. A phosphoserine mark is found at Ser523, Ser525, and Ser530. Positions 530–542 are enriched in basic and acidic residues; that stretch reads SQEKEHKNKDETV.

The protein belongs to the PRP38 family.

It is found in the nucleus. May be required for pre-mRNA splicing. In Rattus norvegicus (Rat), this protein is Pre-mRNA-splicing factor 38B (Prpf38b).